The chain runs to 142 residues: Small ribosomal subunit protein uS12 (142 aa).

Residues 1-44 (MTNGKYAARKLKKDRQQRRWSDSEYARRERGLGKKSDPLEGAPQ) are disordered. Basic residues predominate over residues 7–16 (AARKLKKDRQ). Basic and acidic residues predominate over residues 17–38 (QRRWSDSEYARRERGLGKKSDP).

This sequence belongs to the universal ribosomal protein uS12 family. In terms of assembly, part of the 30S ribosomal subunit.

Its function is as follows. With S4 and S5 plays an important role in translational accuracy. Located at the interface of the 30S and 50S subunits. This Halobacterium salinarum (strain ATCC 29341 / DSM 671 / R1) protein is Small ribosomal subunit protein uS12.